The following is a 104-amino-acid chain: L-rhamnose mutarotase (104 aa).

Y18 serves as a coordination point for substrate. Catalysis depends on H22, which acts as the Proton donor. Substrate contacts are provided by residues Y41 and 76-77 (WW).

The protein belongs to the rhamnose mutarotase family. As to quaternary structure, homodimer.

Its subcellular location is the cytoplasm. It carries out the reaction alpha-L-rhamnose = beta-L-rhamnose. The protein operates within carbohydrate metabolism; L-rhamnose metabolism. Functionally, involved in the anomeric conversion of L-rhamnose. In Listeria monocytogenes serovar 1/2a (strain ATCC BAA-679 / EGD-e), this protein is L-rhamnose mutarotase.